The primary structure comprises 65 residues: Small ribosomal subunit protein eS27 (65 aa).

Zn(2+) contacts are provided by cysteine 21, cysteine 24, cysteine 40, and cysteine 43. The C4-type zinc-finger motif lies at 21–43; that stretch reads CRDCGNVQVVFARPSSTVTCNIC.

The protein belongs to the eukaryotic ribosomal protein eS27 family. As to quaternary structure, part of the 30S ribosomal subunit. The cofactor is Zn(2+).

This Thermoplasma acidophilum (strain ATCC 25905 / DSM 1728 / JCM 9062 / NBRC 15155 / AMRC-C165) protein is Small ribosomal subunit protein eS27.